A 401-amino-acid chain; its full sequence is LWLPVIFFVVSNPKLILLKRVVFFQSWSNRPHGSSYFNKNIQFRRNSFVIVKASGSRTSKKQVEITYNPEEKFNKLADEVDREAGLSRLTLFSPCKINVFLRITSKRDDGYHDLASLFHVISLGDKIKFSLSPSKSKDRLSTNVAGVPLDERNLIIKALNLYRKKTGTDNYFWIHLDKKVPTGAGLGGGSSNAATTLWAANQFSGCVATEKELQEWSGEIGSDIPFFFSHGAAYCTGRGEVVQDIPSPIPFDIPMVLIKPQQACSTAEVYKRFQLDLSSKVDPLSLLEKISTSGISQDVCVNDLEPPAFEVLPSLKRLKQRVIAAGRGQYDAVFMSGSGSTIVGVGSPDPPQFVYDDEEYKDVFLSEASFITRPANEWYVEPVSGSTIGDQPEFSTSFDMS.

Residues 1–88 (LWLPVIFFVV…EVDREAGLSR (88 aa)) constitute a chloroplast and chromoplast transit peptide. 181–191 (PTGAGLGGGSS) contacts ATP.

Belongs to the GHMP kinase family. IspE subfamily. Mg(2+) serves as cofactor.

Its subcellular location is the plastid. The protein resides in the chloroplast. It is found in the chromoplast. The enzyme catalyses 4-CDP-2-C-methyl-D-erythritol + ATP = 4-CDP-2-C-methyl-D-erythritol 2-phosphate + ADP + H(+). It participates in isoprenoid biosynthesis; isopentenyl diphosphate biosynthesis via DXP pathway; isopentenyl diphosphate from 1-deoxy-D-xylulose 5-phosphate: step 3/6. Its function is as follows. Catalyzes the phosphorylation of the position 2 hydroxy group of 4-diphosphocytidyl-2C-methyl-D-erythritol. The chain is 4-diphosphocytidyl-2-C-methyl-D-erythritol kinase, chloroplastic/chromoplastic (ISPE) from Solanum lycopersicum (Tomato).